We begin with the raw amino-acid sequence, 434 residues long: MTGRRPTRPRLFSRGSFLESSRVADILRAETTGGLLLIAAATVAIVWANTPWSASYADLRDLRVGPQAWHLDLTLGAWAADGLLAIFFFVAGLELKREFVAGDLRDPRRAALPVVAAMGGMAVPALVYVLWNLGGDGALQGWAIPTATDIAFAVAILAVISTHLPTGLRTFLLTLAVVDDLLAITIIALFYTDELHLGYLAAAAVPLLVFALLVQRRIHRGWLLIPLAATAWVLVHESGVHATVAGVLLGFAVPVLRSDGQEGPGLAEHLEHLVRPLSAGLAVPVFAFFAAGVTVGGFDGLVDALSDPVALGVVTGLVVGKTVGIAGSTWLLATFTRADLDDQLSWVDVVGLAMLAGIGFTVSLLIGELAFGSGTPRDDHVKVGVLVGSLAATALATGVLRMRNRAYRRLVEIEEQDADADGVPDVYQRDADEG.

The next 11 helical transmembrane spans lie at Gly-34–Ala-54, Leu-73–Leu-93, Ala-111–Trp-131, Gly-141–Ser-161, Phe-171–Tyr-191, Glu-194–Val-214, Val-233–Val-253, Ser-278–Phe-298, Val-313–Ala-333, Trp-346–Ile-366, and His-380–Leu-400.

The protein belongs to the NhaA Na(+)/H(+) (TC 2.A.33) antiporter family.

The protein resides in the cell membrane. The enzyme catalyses Na(+)(in) + 2 H(+)(out) = Na(+)(out) + 2 H(+)(in). Its function is as follows. Na(+)/H(+) antiporter that extrudes sodium in exchange for external protons. The chain is Na(+)/H(+) antiporter NhaA 1 from Nocardioides sp. (strain ATCC BAA-499 / JS614).